A 152-amino-acid polypeptide reads, in one-letter code: Arginine repressor (152 aa).

It belongs to the ArgR family.

The protein localises to the cytoplasm. It functions in the pathway amino-acid biosynthesis; L-arginine biosynthesis [regulation]. Its function is as follows. Regulates arginine biosynthesis genes. The protein is Arginine repressor of Lachnoclostridium phytofermentans (strain ATCC 700394 / DSM 18823 / ISDg) (Clostridium phytofermentans).